A 227-amino-acid chain; its full sequence is Ubiquitin-conjugating enzyme E2 6 (227 aa).

Over 1–206 (MASKGAYKRL…NSKQSWVKSR (206 aa)) the chain is Cytoplasmic. One can recognise a UBC core domain in the interval 5-163 (GAYKRLMKEY…FPELIDKNRE (159 aa)). Cys-87 serves as the catalytic Glycyl thioester intermediate. The helical transmembrane segment at 207 to 225 (WSIAVLVFFALALARFFGA) threads the bilayer.

It belongs to the ubiquitin-conjugating enzyme family.

It localises to the endoplasmic reticulum membrane. It carries out the reaction S-ubiquitinyl-[E1 ubiquitin-activating enzyme]-L-cysteine + [E2 ubiquitin-conjugating enzyme]-L-cysteine = [E1 ubiquitin-activating enzyme]-L-cysteine + S-ubiquitinyl-[E2 ubiquitin-conjugating enzyme]-L-cysteine.. Its pathway is protein modification; protein ubiquitination. In terms of biological role, catalyzes the covalent attachment of ubiquitin to other proteins. Functions in degradation of misfolded or regulated proteins localized in the endoplasmic reticulum (ER) lumen or membrane via the ubiquitin-proteasome system. Cognate E2 conjugating enzyme for the doa10 ubiquitin ligase complex, which is part of the ERAD-C pathway responsible for the rapid degradation of membrane proteins with misfolded cytoplasmic domains. The protein is Ubiquitin-conjugating enzyme E2 6 (ubc6) of Schizosaccharomyces pombe (strain 972 / ATCC 24843) (Fission yeast).